The sequence spans 463 residues: Peptidase inhibitor 16 (463 aa).

Positions 1–27 (MHGSCSFLMLLLPLLLLLVATTGPVGA) are cleaved as a signal peptide. The SCP domain maps to 37-165 (VELHNLYRAQ…TNIELLVCNY (129 aa)). Asn-114 carries an N-linked (GlcNAc...) asparagine glycan. Disordered regions lie at residues 262-281 (TQAP…TEAP), 303-341 (EPVT…DPKM), and 383-408 (LQAT…SATA). Residues 318–327 (SADKVTDKTK) show a composition bias toward basic and acidic residues. The interval 386–395 (TLDHTGHTSS) is O-glycosylated at one site. Residues 392–408 (HTSSKSLPNFPNTSATA) are compositionally biased toward polar residues. Asn-403 and Asn-409 each carry an N-linked (GlcNAc...) asparagine glycan.

It belongs to the CRISP family. Interacts with PSP94/MSMB. In terms of processing, N- and O-glycosylated. O-glycosylated with core 1 or possibly core 8 glycans. As to expression, expressed in prostate, testis, ovary and intestine. Concentrates in prostate cancer patient's sera.

It is found in the secreted. Functionally, may inhibit cardiomyocyte growth. This chain is Peptidase inhibitor 16 (PI16), found in Homo sapiens (Human).